Here is a 418-residue protein sequence, read N- to C-terminus: Glutamyl-tRNA reductase (418 aa).

Residues 49 to 52 (TCNR), serine 109, 114 to 116 (EPQ), and glutamine 120 each bind substrate. Cysteine 50 functions as the Nucleophile in the catalytic mechanism. 189–194 (GAGETI) lines the NADP(+) pocket.

Belongs to the glutamyl-tRNA reductase family. In terms of assembly, homodimer.

It catalyses the reaction (S)-4-amino-5-oxopentanoate + tRNA(Glu) + NADP(+) = L-glutamyl-tRNA(Glu) + NADPH + H(+). Its pathway is porphyrin-containing compound metabolism; protoporphyrin-IX biosynthesis; 5-aminolevulinate from L-glutamyl-tRNA(Glu): step 1/2. In terms of biological role, catalyzes the NADPH-dependent reduction of glutamyl-tRNA(Glu) to glutamate 1-semialdehyde (GSA). The chain is Glutamyl-tRNA reductase from Citrobacter koseri (strain ATCC BAA-895 / CDC 4225-83 / SGSC4696).